Reading from the N-terminus, the 686-residue chain is MSKIRVHEYAKKHNISSKDLMTKLKEMNIEVSNHMTMLDDEVVNKLDNEYQTEKPSVADEFEVEEKVVRSKKNSNKKKKKGKGNEDKRQENFAGRQQTQTVETPDKITFSGSLTVGDLAKKLSKEPSEIIKKLFMLGIMATINQDLDKDTIELIANDYGIEVEEEVIVSETEFETFIDEQDDEENLKERPAVVTIMGHVDHGKTTLLDSIRNSKVTAGEAGGITQHIGAYQVEVNDKKITFLDTPGHAAFTTMRARGAQVTDITILVVAADDGVMPQTVEAINHAKAAGVPIIVAVNKMDKPAANPDRVMQELTEYELVPEAWGGDTIFVPISAIQGEGIDNLLEMILLVSEVEEYKANPNRYATGTVIEAQLDKGKGTIATLLVQNGTLRVGDPIVVGTTFGRVRAMVSDIGRRVKVAGPSTPVEITGLNEVPQAGDRFMAFADEKKARQIGESRAQEALLAQRGEKSKLSLEDLFQQIQEGDVKEINLIVKADVQGSVEAMAASLRKIDVEGVKVKIIHTGVGAITESDIILASASNAIVIGFNVRPDVNAKRTAELENVDIRLHRIIYKVIEEIEAAMQGMLDPEFEEKVIGQAEVRQTFKVTKVGTIAGCYVTDGKITRDSGVRIIRDGVVIYEGQLDTLKRFKDDVKEVAQNYECGITIEKYNDLKEGDIIEAYIMEEVKR.

Residues 53-105 form a disordered region; that stretch reads EKPSVADEFEVEEKVVRSKKNSNKKKKKGKGNEDKRQENFAGRQQTQTVETPD. Over residues 69–81 the composition is skewed to basic residues; the sequence is RSKKNSNKKKKKG. Residues 188–357 form the tr-type G domain; sequence ERPAVVTIMG…LLVSEVEEYK (170 aa). The interval 197–204 is G1; that stretch reads GHVDHGKT. 197–204 lines the GTP pocket; it reads GHVDHGKT. Residues 222 to 226 are G2; it reads GITQH. Residues 243–246 are G3; it reads DTPG. Residues 243–247 and 297–300 contribute to the GTP site; these read DTPGH and NKMD. The tract at residues 297–300 is G4; that stretch reads NKMD. The segment at 333–335 is G5; sequence SAI.

It belongs to the TRAFAC class translation factor GTPase superfamily. Classic translation factor GTPase family. IF-2 subfamily.

The protein localises to the cytoplasm. One of the essential components for the initiation of protein synthesis. Protects formylmethionyl-tRNA from spontaneous hydrolysis and promotes its binding to the 30S ribosomal subunits. Also involved in the hydrolysis of GTP during the formation of the 70S ribosomal complex. The sequence is that of Translation initiation factor IF-2 from Bacillus cereus (strain ATCC 10987 / NRS 248).